The following is a 708-amino-acid chain: Caprin-1 (708 aa).

Low complexity-rich tracts occupy residues 1-15 (MPSA…SKSS) and 22-37 (GSSG…APAS). The tract at residues 1–48 (MPSATSHSGSGSKSSGPPPPSGSSGNEAGAGAAAPASQHPMTGTGAVQ) is disordered. Residue proline 2 is modified to N-acetylproline. Serine 10 carries the post-translational modification Phosphoserine. A coiled-coil region spans residues 58–92 (VIDKKLRNLEKKKGKLDDYQERMNKGERLNQDQLD). Serine 113 carries the phosphoserine modification. Residues 123–151 (KTIKKTARREQLMREEAEQKRLKTVLELQ) adopt a coiled-coil conformation. Arginine 163 is subject to Omega-N-methylarginine. The segment at 258–287 (EEAASAPTVEDQAAEAEPEPVEEYTEQNEV) is disordered. Acidic residues predominate over residues 269-287 (QAAEAEPEPVEEYTEQNEV). Residues serine 333 and serine 341 each carry the phosphoserine modification. The tract at residues 358-379 (QDLMAQMQGPYNFIQDSMLDFE) is G3BP1-binding. Residues 415–452 (LAQPNQVSVQPEATQVPLVSSTSEGYTASQPLYQPSHA) are compositionally biased toward polar residues. 4 disordered regions span residues 415–459 (LAQP…RPQK), 473–497 (TDQT…GTSK), 521–559 (NAPV…QTEL), and 571–708 (YHGS…QQVN). Composition is skewed to low complexity over residues 475-489 (QTTA…SQPQ) and 535-559 (QQNQ…QTEL). The span at 572–603 (HGSQDQPHQVTGNHQQPPQQNTGFPRSNQPYY) shows a compositional bias: polar residues. Residue tyrosine 623 is modified to Phosphotyrosine. Omega-N-methylarginine occurs at positions 624 and 631. A phosphotyrosine mark is found at tyrosine 634 and tyrosine 637. Residue arginine 638 is modified to Omega-N-methylarginine. The span at 640–656 (SFSTNTPNSGYTQSQFS) shows a compositional bias: polar residues. O-linked (GlcNAc) serine glycans are attached at residues serine 642 and serine 648. 4 positions are modified to phosphotyrosine: tyrosine 650, tyrosine 661, tyrosine 664, and tyrosine 669. Composition is skewed to low complexity over residues 675 to 685 (RGSGQSGPRGA) and 696 to 708 (NRGM…QQVN). Arginine 697 carries the post-translational modification Asymmetric dimethylarginine; alternate. Arginine 697 carries the omega-N-methylarginine; alternate modification.

Belongs to the caprin family. May form homomultimers. Interacts with G3BP1; interaction is direct and promotes stress granule formation. Interacts with G3BP2; interaction is direct and promotes stress granule formation. Interacts with PQBP1. Interacts with DDX3X. Interacts (when phosphorylated by EPHA4) with FMR1; interaction with FMR1 promotes formation of a membraneless compartment. In terms of processing, tyrosine phosphorylation by EPHA4 promotes interaction with FMR1 and liquid-liquid phase separation (LLPS) for the formation of a membraneless compartment that concentrates mRNAs with associated regulatory factors. Post-translationally, O-glycosylated (O-GlcNAcylated), in a cell cycle-dependent manner. O-glycosylation by OGT inhibit ability to undergo liquid-liquid phase separation (LLPS).

Its subcellular location is the cytoplasm. The protein localises to the cytoplasmic ribonucleoprotein granule. It is found in the cytosol. It localises to the cell projection. The protein resides in the dendrite. Its subcellular location is the lamellipodium. Its activity is regulated as follows. Ability to mediate liquid-liquid phase separation is regulated by ATP: moderate concentrations of ATP enhance phase separation, whereas high concentrations of ATP lead to inhibition of phase separation. Functionally, mRNA-binding protein that acts as a regulator of mRNAs transport, translation and/or stability, and which is involved in neurogenesis, synaptic plasticity in neurons and cell proliferation and migration in multiple cell types. Plays an essential role in cytoplasmic stress granule formation. Acts as an mRNA regulator by mediating formation of some phase-separated membraneless compartment: undergoes liquid-liquid phase separation upon binding to target mRNAs, leading to assemble mRNAs into cytoplasmic ribonucleoprotein granules that concentrate mRNAs with associated regulatory factors. Undergoes liquid-liquid phase separation following phosphorylation and interaction with FMR1, promoting formation of cytoplasmic ribonucleoprotein granules that concentrate mRNAs with factors that inhibit translation and mediate deadenylation of target mRNAs. In these cytoplasmic ribonucleoprotein granules, CAPRIN1 mediates recruitment of CNOT7 deadenylase, leading to mRNA deadenylation and degradation. Binds directly and selectively to MYC and CCND2 mRNAs. In neuronal cells, directly binds to several mRNAs associated with RNA granules, including BDNF, CAMK2A, CREB1, MAP2, NTRK2 mRNAs, as well as to GRIN1 and KPNB1 mRNAs, but not to rRNAs. This chain is Caprin-1 (CAPRIN1), found in Bos taurus (Bovine).